A 760-amino-acid chain; its full sequence is Dipeptidyl peptidase 4 (760 aa).

The Cytoplasmic segment spans residues Met1–Lys6. A helical; Signal-anchor for type II membrane protein membrane pass occupies residues Val7–Leu28. Topologically, residues Ser29 to His760 are extracellular. 7 N-linked (GlcNAc...) asparagine glycosylation sites follow: Asn83, Asn90, Asn144, Asn213, Asn223, Asn315, and Asn328. 4 disulfides stabilise this stretch: Cys322/Cys333, Cys379/Cys388, Cys438/Cys441, and Cys448/Cys466. N-linked (GlcNAc...) asparagine glycosylation occurs at Asn514. Ser624 serves as the catalytic Charge relay system. Cys643 and Cys756 are oxidised to a cystine. N-linked (GlcNAc...) asparagine glycosylation is present at Asn679. Catalysis depends on charge relay system residues Asp702 and His734.

It belongs to the peptidase S9B family. DPPIV subfamily. In terms of assembly, monomer. Homodimer. Heterodimer with Seprase (FAP). Requires homodimerization for optimal dipeptidyl peptidase activity and T-cell costimulation. Found in a membrane raft complex, at least composed of BCL10, CARD11, DPP4 and IKBKB. Associates with collagen. Interacts with PTPRC; the interaction is enhanced in an interleukin-12-dependent manner in activated lymphocytes. Interacts (via extracellular domain) with ADA; does not inhibit its dipeptidyl peptidase activity. Interacts with CAV1 (via the N-terminus); the interaction is direct. Interacts (via cytoplasmic tail) with CARD11 (via PDZ domain); its homodimerization is necessary for interaction with CARD11. Interacts with IGF2R; the interaction is direct. Interacts with GPC3. The soluble form (Dipeptidyl peptidase 4 soluble form also named SDPP) derives from the membrane form (Dipeptidyl peptidase 4 membrane form also named MDPP) by proteolytic processing. Post-translationally, N- and O-Glycosylated. In terms of processing, phosphorylated. Mannose 6-phosphate residues in the carbohydrate moiety are necessary for interaction with IGF2R in activated T-cells. Mannose 6-phosphorylation is induced during T-cell activation.

Its subcellular location is the secreted. The protein resides in the cell membrane. It is found in the apical cell membrane. The protein localises to the cell projection. It localises to the invadopodium membrane. Its subcellular location is the lamellipodium membrane. The protein resides in the cell junction. It is found in the membrane raft. The enzyme catalyses Release of an N-terminal dipeptide, Xaa-Yaa-|-Zaa-, from a polypeptide, preferentially when Yaa is Pro, provided Zaa is neither Pro nor hydroxyproline.. Inhibited by GPC3 and diprotin A. In terms of biological role, cell surface glycoprotein receptor involved in the costimulatory signal essential for T-cell receptor (TCR)-mediated T-cell activation. Acts as a positive regulator of T-cell coactivation, by binding at least ADA, CAV1, IGF2R, and PTPRC. Its binding to CAV1 and CARD11 induces T-cell proliferation and NF-kappa-B activation in a T-cell receptor/CD3-dependent manner. Its interaction with ADA also regulates lymphocyte-epithelial cell adhesion. In association with FAP is involved in the pericellular proteolysis of the extracellular matrix (ECM), the migration and invasion of endothelial cells into the ECM. May be involved in the promotion of lymphatic endothelial cells adhesion, migration and tube formation. When overexpressed, enhanced cell proliferation, a process inhibited by GPC3. Also acts as a serine exopeptidase with a dipeptidyl peptidase activity that regulates various physiological processes by cleaving peptides in the circulation, including many chemokines, mitogenic growth factors, neuropeptides and peptide hormones. Removes N-terminal dipeptides sequentially from polypeptides having unsubstituted N-termini provided that the penultimate residue is proline. The protein is Dipeptidyl peptidase 4 (Dpp4) of Mus musculus (Mouse).